We begin with the raw amino-acid sequence, 470 residues long: Uronate isomerase (470 aa).

Belongs to the metallo-dependent hydrolases superfamily. Uronate isomerase family.

It catalyses the reaction D-glucuronate = D-fructuronate. The catalysed reaction is aldehydo-D-galacturonate = keto-D-tagaturonate. The protein operates within carbohydrate metabolism; pentose and glucuronate interconversion. The chain is Uronate isomerase from Escherichia fergusonii (strain ATCC 35469 / DSM 13698 / CCUG 18766 / IAM 14443 / JCM 21226 / LMG 7866 / NBRC 102419 / NCTC 12128 / CDC 0568-73).